We begin with the raw amino-acid sequence, 357 residues long: Dihydroorotate dehydrogenase (quinone) (357 aa).

Residues 61–65 (AGFDK) and Thr-85 contribute to the FMN site. Lys-65 lines the substrate pocket. 110 to 114 (NRFGF) serves as a coordination point for substrate. FMN contacts are provided by Asn-141 and Asn-172. Position 172 (Asn-172) interacts with substrate. Residue Ser-175 is the Nucleophile of the active site. Asn-177 is a binding site for substrate. Residues Lys-217 and Gly-245 each contribute to the FMN site. Position 246–247 (246–247 (NT)) interacts with substrate. FMN is bound by residues Gly-268, Gly-297, and 318-319 (YS).

It belongs to the dihydroorotate dehydrogenase family. Type 2 subfamily. Monomer. The cofactor is FMN.

The protein resides in the cell membrane. The enzyme catalyses (S)-dihydroorotate + a quinone = orotate + a quinol. The protein operates within pyrimidine metabolism; UMP biosynthesis via de novo pathway; orotate from (S)-dihydroorotate (quinone route): step 1/1. Its function is as follows. Catalyzes the conversion of dihydroorotate to orotate with quinone as electron acceptor. This Xanthobacter autotrophicus (strain ATCC BAA-1158 / Py2) protein is Dihydroorotate dehydrogenase (quinone).